The primary structure comprises 211 residues: Urease accessory protein UreE (211 aa).

A disordered region spans residues F134–K211. A compositionally biased stretch (basic and acidic residues) spans P147–D202.

It belongs to the UreE family.

The protein localises to the cytoplasm. Functionally, involved in urease metallocenter assembly. Binds nickel. Probably functions as a nickel donor during metallocenter assembly. This Rhodopseudomonas palustris (strain BisB18) protein is Urease accessory protein UreE.